The following is a 472-amino-acid chain: H(+)/Cl(-) exchange transporter ClcA (472 aa).

Residues Met-1–Pro-32 lie on the Cytoplasmic side of the membrane. The helical transmembrane segment at Leu-33–Ala-69 threads the bilayer. Topologically, residues Gln-70–Tyr-76 are periplasmic. The helical transmembrane segment at Leu-77 to Phe-100 threads the bilayer. Positions Gly-106–Pro-110 match the Selectivity filter part_1 motif. Ser-107 contributes to the chloride binding site. Positions Ile-109–Leu-116 form an intramembrane region, helical. Residues Glu-117–Arg-123 lie on the Cytoplasmic side of the membrane. Transmembrane regions (helical) follow at residues Trp-124–Ala-141 and Glu-148–Phe-166. The Selectivity filter part_2 motif lies at Gly-146–Pro-150. The Cytoplasmic segment spans residues Arg-167 to Thr-176. 2 consecutive intramembrane regions (helical) follow at residues Leu-177 to Ala-189 and Pro-193 to Ile-201. The Cytoplasmic segment spans residues Glu-202–Ser-214. Residues Ile-215–Phe-232 traverse the membrane as a helical segment. At Asn-233–Leu-252 the chain is on the periplasmic side. The chain crosses the membrane as a helical span at residues Trp-253–Gln-281. The Cytoplasmic portion of the chain corresponds to Arg-282–Asn-287. Residues Ile-288–Gln-309 traverse the membrane as a helical segment. Over Pro-310 to Ser-329 the chain is Periplasmic. 2 consecutive transmembrane segments (helical) span residues Val-330–Ser-349 and Gly-355–Ile-376. The Selectivity filter part_3 signature appears at Gly-355–Pro-359. Residues Ile-356 and Phe-357 each contribute to the chloride site. The Periplasmic segment spans residues Pro-377 to Ala-386. Residues Gly-387 to Ser-401 constitute an intramembrane region (helical). The note=Loop between two helices intramembrane region spans Val-402 to Ala-404. Positions Pro-405–Thr-416 form an intramembrane region, helical. Positions Asp-417–Leu-421 form an intramembrane region, note=Loop between two helices. The chain crosses the membrane as a helical span at residues Ile-422–Phe-438. At Leu-439–Thr-472 the chain is on the cytoplasmic side. Tyr-445 lines the chloride pocket.

Belongs to the chloride channel (TC 2.A.49) family. ClcA subfamily. Homodimer.

Its subcellular location is the cell inner membrane. It catalyses the reaction 2 chloride(in) + H(+)(out) = 2 chloride(out) + H(+)(in). Functionally, proton-coupled chloride transporter. Functions as antiport system and exchanges two chloride ions for 1 proton. Probably acts as an electrical shunt for an outwardly-directed proton pump that is linked to amino acid decarboxylation, as part of the extreme acid resistance (XAR) response. The sequence is that of H(+)/Cl(-) exchange transporter ClcA from Klebsiella pneumoniae (strain 342).